Reading from the N-terminus, the 1152-residue chain is Fork-head transcriptional regulator FHL1 (1152 aa).

Positions 55–147 (TATNNVLPES…SEDDNNNNNN (93 aa)) are disordered. A compositionally biased stretch (basic and acidic residues) spans 64–83 (SNKKDKPIDTQDLHEDDPKA). The segment covering 87–101 (TTSNGESTSNSNSVS) has biased composition (low complexity). The span at 126–135 (VPVTSNSKSL) shows a compositional bias: polar residues. Residues 171 to 229 (VVLGRKSNDETLQQNVDVHLSSKKAISRRHAKIFYNFGTQRFEISILGRNGAFVDNVFV) form the FHA domain. Disordered regions lie at residues 254-362 (LPSN…RKNS) and 514-557 (KKQL…PPAS). Polar residues predominate over residues 271–286 (KQFNPSDAINLRSNLY). Residues 296–307 (PKRKPQPSKKVK) show a composition bias toward basic residues. The span at 328–358 (TTAISPTASISTSTNAATAATATTPATTTAA) shows a compositional bias: low complexity. Coiled coils occupy residues 449-537 (DDDE…SLAK) and 734-777 (ELYI…QKSL). A DNA-binding region (fork-head) is located at residues 659–756 (KPNISFQIMI…QREIAKAKAK (98 aa)). 4 disordered regions span residues 787-833 (ASPY…GTSP), 846-867 (RGNG…MNDP), 951-1010 (HEGI…VPQQ), and 1057-1152 (PAMQ…AKTE). Low complexity-rich tracts occupy residues 804 to 826 (SQSS…GSTT), 851 to 863 (TPAT…SLPA), and 973 to 987 (TTTS…TTPQ). Pro residues-rich tracts occupy residues 996–1006 (VKPPISTPLPQ) and 1072–1082 (TSVPVPLPVPS). Polar residues-rich tracts occupy residues 1115-1128 (SSLS…SNKP) and 1143-1152 (QATNKIAKTE).

As to quaternary structure, interacts with IFH1 and TBF1.

Its subcellular location is the nucleus. In complex with IFH1, acts as a transcriptional regulator of rRNA and ribosomal protein genes. The FHL1-IFH1 complex is targeted to the ribosomal protein genes by the DNA-binding factor TBF1. This is Fork-head transcriptional regulator FHL1 (FHL1) from Candida albicans (strain SC5314 / ATCC MYA-2876) (Yeast).